A 1107-amino-acid chain; its full sequence is Miniconductance mechanosensitive channel MscM (1107 aa).

A signal peptide spans 1–19 (MRLIITFLMAWCLSWGAYA). The next 11 helical transmembrane spans lie at 467–487 (VMML…ILVG), 522–542 (LFWS…LGYG), 551–571 (LAVA…VVMI), 600–620 (YLMS…FDNL), 628–648 (SLGR…TLSL), 674–694 (MMIG…LATA), 698–718 (LARL…YHVI), 785–805 (ILML…HSAF), 828–848 (PITL…TQLV), 875–895 (TITK…MIGI), and 910–930 (GLGF…IILF).

The protein belongs to the MscS (TC 1.A.23) family. Homoheptamer.

Its subcellular location is the cell inner membrane. In terms of biological role, mechanosensitive channel that protects cells against hypoosmotic stress when highly overexpressed. Gates spontaneously in response to increased membrane tension. The chain is Miniconductance mechanosensitive channel MscM (mscM) from Escherichia coli (strain K12).